A 100-amino-acid chain; its full sequence is Urease subunit gamma (100 aa).

The protein belongs to the urease gamma subunit family. In terms of assembly, heterotrimer of UreA (gamma), UreB (beta) and UreC (alpha) subunits. Three heterotrimers associate to form the active enzyme.

The protein resides in the cytoplasm. The enzyme catalyses urea + 2 H2O + H(+) = hydrogencarbonate + 2 NH4(+). It functions in the pathway nitrogen metabolism; urea degradation; CO(2) and NH(3) from urea (urease route): step 1/1. The chain is Urease subunit gamma from Corynebacterium efficiens (strain DSM 44549 / YS-314 / AJ 12310 / JCM 11189 / NBRC 100395).